The chain runs to 241 residues: Aspartate/glutamate leucyltransferase (241 aa).

This sequence belongs to the R-transferase family. Bpt subfamily.

Its subcellular location is the cytoplasm. The catalysed reaction is N-terminal L-glutamyl-[protein] + L-leucyl-tRNA(Leu) = N-terminal L-leucyl-L-glutamyl-[protein] + tRNA(Leu) + H(+). The enzyme catalyses N-terminal L-aspartyl-[protein] + L-leucyl-tRNA(Leu) = N-terminal L-leucyl-L-aspartyl-[protein] + tRNA(Leu) + H(+). In terms of biological role, functions in the N-end rule pathway of protein degradation where it conjugates Leu from its aminoacyl-tRNA to the N-termini of proteins containing an N-terminal aspartate or glutamate. The chain is Aspartate/glutamate leucyltransferase from Helicobacter hepaticus (strain ATCC 51449 / 3B1).